The chain runs to 424 residues: Circumsporozoite protein (424 aa).

A signal peptide spans 1–18 (MMRKLAILSVSSFLFVEA). The disordered stretch occupies residues 69-339 (SRSLGENDDG…VKNNNNEEPS (271 aa)). Residues 85-106 (NNREGKDEDKRDGNNEDNETLR) show a composition bias toward basic and acidic residues. Residues 104-111 (TLRKPKHK) are required for the binding to heparan sulfate proteoglycans (HSPGs) on the surface of host hepatocytes. The tract at residues 112-116 (KLKQP) is region I; contains the proteolytic cleavage site. A compositionally biased stretch (low complexity) spans 120 to 300 (NPDPNANPNV…PNANPNANPN (181 aa)). Repeat copies occupy residues 123–126 (PNAN), 127–130 (PNVD), 131–134 (PNAN), 135–138 (PNVD), 139–142 (PNAN), 143–146 (PNVD), 147–150 (PNAN), 151–154 (PNAN), 155–158 (PNAN), 159–162 (PNAN), 163–166 (PNAN), 167–170 (PNAN), 171–174 (PNAN), 175–178 (PNAN), 179–182 (PNAN), 183–186 (PNAN), 187–190 (PNAN), 191–194 (PNAN), 195–198 (PNAN), 199–202 (PNAN), 203–206 (PNAN), 207–210 (PNAN), 211–214 (PNAN), 215–218 (PNAN), 219–222 (PNAN), 223–226 (PNAN), 227–230 (PNAN), 231–234 (PNAN), 235–238 (PNAN), 239–242 (PNAN), 243–246 (PNAN), 247–250 (PNAN), 251–254 (PNAN), 255–258 (PNAN), 259–262 (PNAN), 263–266 (PNAN), 267–270 (PNAN), 271–274 (PNAN), 275–278 (PNAN), 279–282 (PNAN), 283–286 (PNAN), 287–290 (PNAN), 291–294 (PNAN), and 295–298 (PNAN). Residues 123 to 298 (PNANPNVDPN…ANPNANPNAN (176 aa)) form a 44 X 4 AA tandem repeats of P-N-[AV]-[ND] region. Positions 301-316 (KNNQGNGQGHNMPNDP) are enriched in polar residues. A compositionally biased stretch (low complexity) spans 322-336 (ENANANNAVKNNNNE). Residues 349–402 (KIQNSLSTEWSPCSVTCGNGIQVRIKPGSANKPKDELDYENDIEKKICKMEKCS) form the TSP type-1 domain. Disulfide bonds link Cys361–Cys396 and Cys365–Cys401. Thr364 is a glycosylation site (O-linked (Fuc) threonine). The GPI-anchor amidated cysteine moiety is linked to residue Cys401. Positions 402–424 (SSVFNVVNSSIGLIMVLSFLFLN) are cleaved as a propeptide — removed in mature form.

It belongs to the plasmodium circumsporozoite protein family. In terms of processing, during host cell invasion, proteolytically cleaved at the cell membrane in the region I by a papain-like cysteine protease of parasite origin. Cleavage is triggered by the sporozoite contact with highly sulfated heparan sulfate proteoglycans (HSPGs) present on the host hepatocyte cell surface. Cleavage exposes the TSP type-1 (TSR) domain and is required for productive invasion of host hepatocytes but not for adhesion to the host cell membrane. Cleavage is dispensable for sporozoite development in the oocyst, motility and for traversal of host and vector cells. Post-translationally, O-glycosylated; maybe by POFUT2.

The protein resides in the cell membrane. It is found in the cytoplasm. Its function is as follows. Essential sporozoite protein. In the mosquito vector, required for sporozoite development in the oocyst, migration through the vector hemolymph and entry into the vector salivary glands. In the vertebrate host, required for sporozoite migration through the host dermis and infection of host hepatocytes. Binds to highly sulfated heparan sulfate proteoglycans (HSPGs) on the surface of host hepatocytes. Functionally, in the vertebrate host, binds to highly sulfated heparan sulfate proteoglycans (HSPGs) on the surface of host hepatocytes and is required for sporozoite invasion of the host hepatocytes. This chain is Circumsporozoite protein, found in Plasmodium falciparum (isolate t4 / Thailand).